We begin with the raw amino-acid sequence, 566 residues long: MERNSSDDEEDHQHLIPQNDTRIRHREDSVSSNATTIGGNQRSAFQIDDILHRVQHRGKISLNKRYVIVFVSLIISIGLLFLLTDPRELFAANFSSFKLDPLSNRVKESELRALYLLRQQQLALLSLWNGTLVNPSLNQSENALGSSVLFEDVKSAVSKQISLNKEIQEVLLSPHRSSNYSGGTDVDSVNFSYNRCRKVDQKLSDRKTVEWKPRSDKFLFAICLSGQMSNHLICLEKHMFFAALLDRVLVIPSSKFDYQYDRVIDIERINTCLGRNVVVAFDQFKEKAKKNHFRIDRFICYFSSPQLCYVDEEHIKKLKGLGISIDGKLEAPWSEDIKKPSKRTVQDVQMKFKSDDDVIAIGDVFYADMEQDWVMQPGGPINHKCKTLIEPSKLILLTAQRFIQTFLGKNFIALHFRRHGFLKFCNAKSPSCFYPIPQAAECIARIVERSNGAVIYLSTDAAESETSLLQSLVVVDGKIVPLVKRPPRNSAEKWDALLYRHGIEDDSQVDAMLDKTICAMSSVFIGASGSTFTEDILRLRKDWGTSSTCDEYLCRGEEPNFIAEDE.

Residues 1–14 show a composition bias toward basic and acidic residues; sequence MERNSSDDEEDHQH. A disordered region spans residues 1–37; it reads MERNSSDDEEDHQHLIPQNDTRIRHREDSVSSNATTI. The chain crosses the membrane as a helical; Signal-anchor for type II membrane protein span at residues 66–86; it reads YVIVFVSLIISIGLLFLLTDP. Residues N93, N129, N138, N179, and N190 are each glycosylated (N-linked (GlcNAc...) asparagine). Substrate-binding positions include 415–417 and 531–532; these read HFR and TF.

It belongs to the glycosyltransferase GT106 family.

It is found in the membrane. It functions in the pathway glycan metabolism. This chain is O-fucosyltransferase 36, found in Arabidopsis thaliana (Mouse-ear cress).